Consider the following 61-residue polypeptide: Large ribosomal subunit protein uL30 (61 aa).

It belongs to the universal ribosomal protein uL30 family. Part of the 50S ribosomal subunit.

This chain is Large ribosomal subunit protein uL30, found in Nitrosomonas eutropha (strain DSM 101675 / C91 / Nm57).